We begin with the raw amino-acid sequence, 540 residues long: Glucose-6-phosphate isomerase (540 aa).

Glu-350 functions as the Proton donor in the catalytic mechanism. Residues His-381 and Lys-503 contribute to the active site.

The protein belongs to the GPI family.

It localises to the cytoplasm. It catalyses the reaction alpha-D-glucose 6-phosphate = beta-D-fructose 6-phosphate. It functions in the pathway carbohydrate biosynthesis; gluconeogenesis. The protein operates within carbohydrate degradation; glycolysis; D-glyceraldehyde 3-phosphate and glycerone phosphate from D-glucose: step 2/4. Functionally, catalyzes the reversible isomerization of glucose-6-phosphate to fructose-6-phosphate. This Burkholderia ambifaria (strain MC40-6) protein is Glucose-6-phosphate isomerase.